A 677-amino-acid chain; its full sequence is Fidgetin-like protein 1 (677 aa).

A compositionally biased stretch (polar residues) spans 203–216 (TSSAPSGESTTATF). Disordered stretches follow at residues 203 to 232 (TSSA…PQSF), 249 to 324 (VPSG…SFNG), and 337 to 378 (GIFG…TDDR). A Glycyl lysine isopeptide (Lys-Gly) (interchain with G-Cter in SUMO2) cross-link involves residue Lys226. The segment covering 264–280 (DSDTINMLSNPTLNKAP) has biased composition (polar residues). Residues 281-292 (SKTEDSGQREDN) are compositionally biased toward basic and acidic residues. N6-acetyllysine is present on Lys341. Residues 347 to 358 (SNKQDGSEQNGN) are compositionally biased toward polar residues. ATP contacts are provided by residues Ala407 and 447 to 452 (GTGKTL).

This sequence belongs to the AAA ATPase family. As to quaternary structure, hexamer. Interacts (via N-terminal one-half region) with RAD51; the interaction is direct. Interacts (via N-terminal one-half region) with SPIDR (via the C-terminal region); the interaction is direct. Interacts with FIRRM; may regulate homologous recombination. Mg(2+) is required as a cofactor.

Its subcellular location is the nucleus. The protein localises to the cytoplasm. It localises to the perinuclear region. The catalysed reaction is ATP + H2O = ADP + phosphate + H(+). Involved in DNA double-strand break (DBS) repair via homologous recombination (HR). Recruited at DSB sites independently of BRCA2, RAD51 and RAD51 paralogs in a H2AX-dependent manner. May regulate osteoblast proliferation and differentiation. May play a role in the control of male meiosis dynamic. The protein is Fidgetin-like protein 1 (Fignl1) of Rattus norvegicus (Rat).